A 512-amino-acid polypeptide reads, in one-letter code: Lysine--tRNA ligase (512 aa).

Mg(2+) is bound by residues Glu-421 and Glu-428.

It belongs to the class-II aminoacyl-tRNA synthetase family. In terms of assembly, homodimer. The cofactor is Mg(2+).

Its subcellular location is the cytoplasm. It catalyses the reaction tRNA(Lys) + L-lysine + ATP = L-lysyl-tRNA(Lys) + AMP + diphosphate. This is Lysine--tRNA ligase from Aeromonas salmonicida (strain A449).